We begin with the raw amino-acid sequence, 378 residues long: Homoserine O-acetyltransferase (378 aa).

The 302-residue stretch at 54–355 folds into the AB hydrolase-1 domain; the sequence is NAILVCHALS…NNPAGHDSFL (302 aa). The Nucleophile role is filled by Ser-159. Substrate is bound at residue Arg-228. Catalysis depends on residues Asp-318 and His-351. Asp-352 contacts substrate.

Belongs to the AB hydrolase superfamily. MetX family. In terms of assembly, homodimer.

Its subcellular location is the cytoplasm. The catalysed reaction is L-homoserine + acetyl-CoA = O-acetyl-L-homoserine + CoA. It functions in the pathway amino-acid biosynthesis; L-methionine biosynthesis via de novo pathway; O-acetyl-L-homoserine from L-homoserine: step 1/1. In terms of biological role, transfers an acetyl group from acetyl-CoA to L-homoserine, forming acetyl-L-homoserine. This Leptospira biflexa serovar Patoc (strain Patoc 1 / Ames) protein is Homoserine O-acetyltransferase.